Here is a 105-residue protein sequence, read N- to C-terminus: Putative neurotoxin 10 (105 aa).

Positions 1–21 (MTVSCSKVLLSLCLFLILLEA) are cleaved as a signal peptide.

Belongs to the scolopendra neurotoxin 10 family. In terms of processing, contains 3 disulfide bonds. Expressed by the venom gland.

The protein resides in the secreted. This Scolopendra mutilans (Chinese red-headed centipede) protein is Putative neurotoxin 10.